Consider the following 427-residue polypeptide: Serine hydroxymethyltransferase (427 aa).

(6S)-5,6,7,8-tetrahydrofolate is bound by residues leucine 118 and 122–124 (GHL). At lysine 227 the chain carries N6-(pyridoxal phosphate)lysine. Residue 351-353 (SPF) coordinates (6S)-5,6,7,8-tetrahydrofolate.

The protein belongs to the SHMT family. As to quaternary structure, homodimer. Pyridoxal 5'-phosphate serves as cofactor.

The protein resides in the cytoplasm. It carries out the reaction (6R)-5,10-methylene-5,6,7,8-tetrahydrofolate + glycine + H2O = (6S)-5,6,7,8-tetrahydrofolate + L-serine. Its pathway is one-carbon metabolism; tetrahydrofolate interconversion. It participates in amino-acid biosynthesis; glycine biosynthesis; glycine from L-serine: step 1/1. In terms of biological role, catalyzes the reversible interconversion of serine and glycine with tetrahydrofolate (THF) serving as the one-carbon carrier. This reaction serves as the major source of one-carbon groups required for the biosynthesis of purines, thymidylate, methionine, and other important biomolecules. Also exhibits THF-independent aldolase activity toward beta-hydroxyamino acids, producing glycine and aldehydes, via a retro-aldol mechanism. The polypeptide is Serine hydroxymethyltransferase (Thermotoga petrophila (strain ATCC BAA-488 / DSM 13995 / JCM 10881 / RKU-1)).